Consider the following 151-residue polypeptide: uncharacterized protein (151 aa).

This is an uncharacterized protein from Rhizobium meliloti (strain 1021) (Ensifer meliloti).